The sequence spans 305 residues: N-acetylneuraminate lyase 2 (305 aa).

Aceneuramate contacts are provided by Ser-47 and Thr-48. Residue Tyr-137 is the Proton donor of the active site. Lys-165 acts as the Schiff-base intermediate with substrate in catalysis. Residues Thr-167, Gly-189, Asp-191, Glu-192, and Ser-208 each contribute to the aceneuramate site.

This sequence belongs to the DapA family. NanA subfamily. Homotetramer.

It localises to the cytoplasm. It carries out the reaction aceneuramate = aldehydo-N-acetyl-D-mannosamine + pyruvate. It participates in amino-sugar metabolism; N-acetylneuraminate degradation; D-fructose 6-phosphate from N-acetylneuraminate: step 1/5. Functionally, catalyzes the reversible aldol cleavage of N-acetylneuraminic acid (sialic acid; Neu5Ac) to form pyruvate and N-acetylmannosamine (ManNAc) via a Schiff base intermediate. The polypeptide is N-acetylneuraminate lyase 2 (Escherichia coli O6:H1 (strain CFT073 / ATCC 700928 / UPEC)).